We begin with the raw amino-acid sequence, 831 residues long: Zinc transporter ZIP10 (831 aa).

The first 25 residues, M1–C25, serve as a signal peptide directing secretion. The interval H126–N318 is disordered. Polar residues predominate over residues E138 to T147. N139 carries an N-linked (GlcNAc...) asparagine glycan. The span at K152–M171 shows a compositional bias: basic and acidic residues. Residues H172 to L188 are compositionally biased toward basic residues. The segment covering D189–N198 has biased composition (basic and acidic residues). N198 and N218 each carry an N-linked (GlcNAc...) asparagine glycan. Polar residues predominate over residues N211–Q221. Residues P229 to R238 are compositionally biased toward basic residues. Composition is skewed to basic and acidic residues over residues D256 to H273 and H281 to H315. N339 carries an N-linked (GlcNAc...) asparagine glycan. Transmembrane regions (helical) follow at residues I411–I431 and F438–H458. Positions Q464 to E484 are disordered. A helical transmembrane segment spans residues V495–I515. 2 positions are modified to phosphothreonine: T536 and T553. S591 is subject to Phosphoserine. 4 helical membrane passes run A687–F707, I732–V752, I759–M779, and F801–Y821.

It belongs to the ZIP transporter (TC 2.A.5) family. As to quaternary structure, interacts with SLC39A6; which triggers cells to undergo EMT and mitosis. Found in a complex with SLC39A6, SLC39A10 and with the 'Ser-727' phosphorylated form of STAT3 throughout mitosis. Found in a complex with SLC39A6, SLC39A10 and with NCAM1; this complex controls NCAM1 phosphorylation and integration into focal adhesion complexes during epithelial-tomesenchymal transition. Found in a complex with SLC39A6, SLC39A10 and with GSK3B that controls NCAM1 phosphorylation. In terms of processing, undergoes N-terminal ectodomain shedding.

It is found in the cell membrane. The protein localises to the apical cell membrane. It catalyses the reaction Zn(2+)(in) = Zn(2+)(out). Functionally, zinc-influx transporter. When associated with SLC39A6, the heterodimer formed by SLC39A10 and SLC39A6 mediates cellular zinc uptake to trigger cells to undergo epithelial-to-mesenchymal transition (EMT). SLC39A10-SLC39A6 heterodimers play also an essentiel role in initiating mitosis by importing zinc into cells to initiate a pathway resulting in the onset of mitosis. Plays an important for both mature B-cell maintenance and humoral immune responses. When associated with SLC39A10, the heterodimer controls NCAM1 phosphorylation and integration into focal adhesion complexes during EMT. This chain is Zinc transporter ZIP10, found in Homo sapiens (Human).